Consider the following 354-residue polypeptide: Holliday junction branch migration complex subunit RuvB (354 aa).

The interval 4–198 is large ATPase domain (RuvB-L); it reads TTDYGASNTG…FGFTAHLDFY (195 aa). ATP-binding positions include Leu37, Arg38, Gly79, Lys82, Thr83, Thr84, 145-147, Arg188, Tyr198, and Arg235; that span reads EDF. Position 83 (Thr83) interacts with Mg(2+). Positions 199 to 269 are small ATPAse domain (RuvB-S); that stretch reads PHEELEKLIE…DVKEALALYQ (71 aa). Residues 272–354 form a head domain (RuvB-H) region; the sequence is SEGLDRLDIA…TPKDDVSKLF (83 aa). DNA-binding residues include Arg327 and Arg332.

This sequence belongs to the RuvB family. Homohexamer. Forms an RuvA(8)-RuvB(12)-Holliday junction (HJ) complex. HJ DNA is sandwiched between 2 RuvA tetramers; dsDNA enters through RuvA and exits via RuvB. An RuvB hexamer assembles on each DNA strand where it exits the tetramer. Each RuvB hexamer is contacted by two RuvA subunits (via domain III) on 2 adjacent RuvB subunits; this complex drives branch migration. In the full resolvosome a probable DNA-RuvA(4)-RuvB(12)-RuvC(2) complex forms which resolves the HJ.

The protein localises to the cytoplasm. The catalysed reaction is ATP + H2O = ADP + phosphate + H(+). Functionally, the RuvA-RuvB-RuvC complex processes Holliday junction (HJ) DNA during genetic recombination and DNA repair, while the RuvA-RuvB complex plays an important role in the rescue of blocked DNA replication forks via replication fork reversal (RFR). RuvA specifically binds to HJ cruciform DNA, conferring on it an open structure. The RuvB hexamer acts as an ATP-dependent pump, pulling dsDNA into and through the RuvAB complex. RuvB forms 2 homohexamers on either side of HJ DNA bound by 1 or 2 RuvA tetramers; 4 subunits per hexamer contact DNA at a time. Coordinated motions by a converter formed by DNA-disengaged RuvB subunits stimulates ATP hydrolysis and nucleotide exchange. Immobilization of the converter enables RuvB to convert the ATP-contained energy into a lever motion, pulling 2 nucleotides of DNA out of the RuvA tetramer per ATP hydrolyzed, thus driving DNA branch migration. The RuvB motors rotate together with the DNA substrate, which together with the progressing nucleotide cycle form the mechanistic basis for DNA recombination by continuous HJ branch migration. Branch migration allows RuvC to scan DNA until it finds its consensus sequence, where it cleaves and resolves cruciform DNA. This chain is Holliday junction branch migration complex subunit RuvB, found in Bifidobacterium longum (strain NCC 2705).